The sequence spans 116 residues: Putative iron-sulfur cluster insertion protein ErpA (116 aa).

Residues cysteine 44, cysteine 108, and cysteine 110 each coordinate iron-sulfur cluster.

Belongs to the HesB/IscA family. Homodimer. Iron-sulfur cluster is required as a cofactor.

Its function is as follows. Required for insertion of 4Fe-4S clusters. This Aromatoleum aromaticum (strain DSM 19018 / LMG 30748 / EbN1) (Azoarcus sp. (strain EbN1)) protein is Putative iron-sulfur cluster insertion protein ErpA.